Here is a 702-residue protein sequence, read N- to C-terminus: ATP-dependent zinc metalloprotease FtsH (702 aa).

Over 1 to 26 (MKKRNKGLVEQTTTEKNNFSRKTAWK) the chain is Cytoplasmic. A helical membrane pass occupies residues 27–47 (VFWWVIILAVVIGVLAYIFSP). Residues 48 to 175 (RAATAVVESW…FIAPDTRARD (128 aa)) are Extracellular-facing. Residues 176 to 196 (VLNGLFGLLPIIIFVVFFLLF) traverse the membrane as a helical segment. The Cytoplasmic portion of the chain corresponds to 197–702 (WRSARGISAG…EVKPESETNS (506 aa)). Residue 271 to 278 (GPPGTGKT) coordinates ATP. Position 493 (H493) interacts with Zn(2+). E494 is an active-site residue. Positions 497 and 572 each coordinate Zn(2+). The segment at 682–702 (EQQAKQKLNKSEVKPESETNS) is disordered. The segment covering 690–702 (NKSEVKPESETNS) has biased composition (basic and acidic residues).

It in the central section; belongs to the AAA ATPase family. The protein in the C-terminal section; belongs to the peptidase M41 family. As to quaternary structure, homohexamer. It depends on Zn(2+) as a cofactor.

It is found in the cell membrane. Its function is as follows. Acts as a processive, ATP-dependent zinc metallopeptidase for both cytoplasmic and membrane proteins. Plays a role in the quality control of integral membrane proteins. This chain is ATP-dependent zinc metalloprotease FtsH, found in Mycoplasma genitalium (strain ATCC 33530 / DSM 19775 / NCTC 10195 / G37) (Mycoplasmoides genitalium).